The chain runs to 156 residues: Jun dimerization protein 2 (156 aa).

A disordered region spans residues 56 to 95 (KRPFDAIKSEDDDDDERKKRRREKNKVAAARCRNRKKERT). One can recognise a bZIP domain in the interval 70–133 (DERKKRRREK…QQLIVMLNLH (64 aa)). The interval 72–94 (RKKRRREKNKVAAARCRNRKKER) is basic motif. The segment at 98 to 126 (LQKESERLEMLNSDLKSQIEELKSERQQL) is leucine-zipper.

Belongs to the bZIP family. ATF subfamily.

The protein localises to the nucleus. In terms of biological role, component of the AP-1 transcription factor that represses transactivation mediated by the Jun family of proteins. The protein is Jun dimerization protein 2 (jdp2) of Danio rerio (Zebrafish).